Consider the following 72-residue polypeptide: Translational regulator CsrA (72 aa).

The protein belongs to the CsrA/RsmA family. Homodimer; the beta-strands of each monomer intercalate to form a hydrophobic core, while the alpha-helices form wings that extend away from the core.

It is found in the cytoplasm. In terms of biological role, a translational regulator that binds mRNA to regulate translation initiation and/or mRNA stability. Usually binds in the 5'-UTR at or near the Shine-Dalgarno sequence preventing ribosome-binding, thus repressing translation. Its main target seems to be the major flagellin gene, while its function is anatagonized by FliW. This chain is Translational regulator CsrA, found in Clostridium novyi (strain NT).